Here is a 344-residue protein sequence, read N- to C-terminus: Aurora kinase B (344 aa).

At Thr35 the chain carries Phosphothreonine. Residues 46–65 form a disordered region; it reads NAQPTAAPGQKVVENSSGTP. At Ser62 the chain carries Phosphoserine. Position 64 is a phosphothreonine (Thr64). One can recognise a Protein kinase domain in the interval 77–327; sequence FEIGRPLGKG…LAQVSAHPWV (251 aa). Residues 83 to 91 and Lys106 each bind ATP; that span reads LGKGKFGNV. Asp200 serves as the catalytic Proton acceptor. An N6-acetyllysine modification is found at Lys215. Ser227 carries the phosphoserine modification. Thr232 bears the Phosphothreonine; by autocatalysis mark.

Belongs to the protein kinase superfamily. Ser/Thr protein kinase family. Aurora subfamily. As to quaternary structure, component of the chromosomal passenger complex (CPC) composed of at least BIRC5/survivin, CDCA8/borealin, INCENP, AURKB or AURKC; predominantly independent AURKB- and AURKC-containing complexes exist. Associates with RACGAP1 during M phase. Interacts with SPDYC; this interaction may be required for proper localization of active, Thr-232-phosphorylated AURKB form during prometaphase and metaphase. Interacts with p53/TP53. Interacts (via the middle kinase domain) with NOC2L (via the N- and C-terminus domains). Interacts with CDCA1. Interacts with EVI5. Interacts with JTB. Interacts with NDC80. Interacts with PSMA3. Interacts with RNF2/RING1B. Interacts with SEPTIN1. Interacts with SIRT2. Interacts with TACC1. Interacts with TTC28. The phosphorylation of Thr-232 requires the binding to INCENP and occurs by means of an autophosphorylation mechanism. Thr-232 phosphorylation is indispensable for the AURKB kinase activity. Post-translationally, acetylated at Lys-215 by KAT5 at kinetochores, increasing AURKB activity and promoting accurate chromosome segregation in mitosis. In terms of processing, ubiquitinated by different BCR (BTB-CUL3-RBX1) E3 ubiquitin ligase complexes. Ubiquitinated by the BCR(KLHL9-KLHL13) E3 ubiquitin ligase complex, ubiquitination leads to removal from mitotic chromosomes and is required for cytokinesis. During anaphase, the BCR(KLHL21) E3 ubiquitin ligase complex recruits the CPC complex from chromosomes to the spindle midzone and mediates the ubiquitination of AURKB. Ubiquitination of AURKB by BCR(KLHL21) E3 ubiquitin ligase complex may not lead to its degradation by the proteasome. Deubiquitinated by USP35; inhibiting CDH1-mediated degradation of AURKB.

The protein resides in the nucleus. It is found in the chromosome. The protein localises to the centromere. It localises to the kinetochore. Its subcellular location is the cytoplasm. The protein resides in the cytoskeleton. It is found in the spindle. The protein localises to the midbody. The enzyme catalyses L-seryl-[protein] + ATP = O-phospho-L-seryl-[protein] + ADP + H(+). It carries out the reaction L-threonyl-[protein] + ATP = O-phospho-L-threonyl-[protein] + ADP + H(+). Activity is greatly increased when AURKB is within the CPC complex. In particular, AURKB-phosphorylated INCENP acts as an activator of AURKB. Positive feedback between HASPIN and AURKB contributes to CPC localization. In terms of biological role, serine/threonine-protein kinase component of the chromosomal passenger complex (CPC), a complex that acts as a key regulator of mitosis. The CPC complex has essential functions at the centromere in ensuring correct chromosome alignment and segregation and is required for chromatin-induced microtubule stabilization and spindle assembly. Involved in the bipolar attachment of spindle microtubules to kinetochores and is a key regulator for the onset of cytokinesis during mitosis. Required for central/midzone spindle assembly and cleavage furrow formation. Key component of the cytokinesis checkpoint, a process required to delay abscission to prevent both premature resolution of intercellular chromosome bridges and accumulation of DNA damage: phosphorylates CHMP4C, leading to retain abscission-competent VPS4 (VPS4A and/or VPS4B) at the midbody ring until abscission checkpoint signaling is terminated at late cytokinesis. AURKB phosphorylates the CPC complex subunits BIRC5/survivin, CDCA8/borealin and INCENP. Phosphorylation of INCENP leads to increased AURKB activity. Other known AURKB substrates involved in centromeric functions and mitosis are CENPA, DES/desmin, GPAF, KIF2C, NSUN2, RACGAP1, SEPTIN1, VIM/vimentin, HASPIN, and histone H3. A positive feedback loop involving HASPIN and AURKB contributes to localization of CPC to centromeres. Phosphorylation of VIM controls vimentin filament segregation in cytokinetic process, whereas histone H3 is phosphorylated at 'Ser-10' and 'Ser-28' during mitosis (H3S10ph and H3S28ph, respectively). AURKB is also required for kinetochore localization of BUB1 and SGO1. Phosphorylation of p53/TP53 negatively regulates its transcriptional activity. Key regulator of active promoters in resting B- and T-lymphocytes: acts by mediating phosphorylation of H3S28ph at active promoters in resting B-cells, inhibiting RNF2/RING1B-mediated ubiquitination of histone H2A and enhancing binding and activity of the USP16 deubiquitinase at transcribed genes. Acts as an inhibitor of CGAS during mitosis: catalyzes phosphorylation of the N-terminus of CGAS during the G2-M transition, blocking CGAS liquid phase separation and activation, and thereby preventing CGAS-induced autoimmunity. Phosphorylates KRT5 during anaphase and telophase. Phosphorylates ATXN10 which promotes phosphorylation of ATXN10 by PLK1 and may play a role in the regulation of cytokinesis and stimulating the proteasomal degradation of ATXN10. The chain is Aurora kinase B (AURKB) from Bos taurus (Bovine).